We begin with the raw amino-acid sequence, 151 residues long: Deoxyuridine 5'-triphosphate nucleotidohydrolase (151 aa).

Substrate is bound by residues 70–72, N83, 87–89, and M97; these read RSG and LID.

Belongs to the dUTPase family. Homotrimer. It depends on Mg(2+) as a cofactor.

It catalyses the reaction dUTP + H2O = dUMP + diphosphate + H(+). It functions in the pathway pyrimidine metabolism; dUMP biosynthesis; dUMP from dCTP (dUTP route): step 2/2. This enzyme is involved in nucleotide metabolism: it produces dUMP, the immediate precursor of thymidine nucleotides and it decreases the intracellular concentration of dUTP so that uracil cannot be incorporated into DNA. The chain is Deoxyuridine 5'-triphosphate nucleotidohydrolase from Escherichia coli O7:K1 (strain IAI39 / ExPEC).